The primary structure comprises 253 residues: 5'/3'-nucleotidase SurE (253 aa).

Residues Asp-8, Asp-9, Ser-39, and Asn-92 each coordinate a divalent metal cation.

Belongs to the SurE nucleotidase family. A divalent metal cation is required as a cofactor.

The protein localises to the cytoplasm. It catalyses the reaction a ribonucleoside 5'-phosphate + H2O = a ribonucleoside + phosphate. The catalysed reaction is a ribonucleoside 3'-phosphate + H2O = a ribonucleoside + phosphate. It carries out the reaction [phosphate](n) + H2O = [phosphate](n-1) + phosphate + H(+). In terms of biological role, nucleotidase with a broad substrate specificity as it can dephosphorylate various ribo- and deoxyribonucleoside 5'-monophosphates and ribonucleoside 3'-monophosphates with highest affinity to 3'-AMP. Also hydrolyzes polyphosphate (exopolyphosphatase activity) with the preference for short-chain-length substrates (P20-25). Might be involved in the regulation of dNTP and NTP pools, and in the turnover of 3'-mononucleotides produced by numerous intracellular RNases (T1, T2, and F) during the degradation of various RNAs. The protein is 5'/3'-nucleotidase SurE of Escherichia fergusonii (strain ATCC 35469 / DSM 13698 / CCUG 18766 / IAM 14443 / JCM 21226 / LMG 7866 / NBRC 102419 / NCTC 12128 / CDC 0568-73).